The chain runs to 534 residues: Probable DNA ligase (534 aa).

E213 contributes to the ATP binding site. K215 (N6-AMP-lysine intermediate) is an active-site residue. The ATP site is built by R220, R235, E264, F303, R375, and K381.

This sequence belongs to the ATP-dependent DNA ligase family. Mg(2+) is required as a cofactor.

The catalysed reaction is ATP + (deoxyribonucleotide)n-3'-hydroxyl + 5'-phospho-(deoxyribonucleotide)m = (deoxyribonucleotide)n+m + AMP + diphosphate.. Its function is as follows. DNA ligase that seals nicks in double-stranded DNA during DNA replication, DNA recombination and DNA repair. The protein is Probable DNA ligase of Mycolicibacterium vanbaalenii (strain DSM 7251 / JCM 13017 / BCRC 16820 / KCTC 9966 / NRRL B-24157 / PYR-1) (Mycobacterium vanbaalenii).